Consider the following 242-residue polypeptide: Purine nucleoside phosphorylase PA4543 (242 aa).

Residues H69, C103, and H120 each contribute to the Zn(2+) site.

The protein belongs to the purine nucleoside phosphorylase YfiH/LACC1 family. In terms of assembly, homodimer. The cofactor is Cu(2+). Zn(2+) serves as cofactor.

It carries out the reaction adenosine + phosphate = alpha-D-ribose 1-phosphate + adenine. The enzyme catalyses S-methyl-5'-thioadenosine + phosphate = 5-(methylsulfanyl)-alpha-D-ribose 1-phosphate + adenine. It catalyses the reaction inosine + phosphate = alpha-D-ribose 1-phosphate + hypoxanthine. The catalysed reaction is adenosine + H2O + H(+) = inosine + NH4(+). In terms of biological role, purine nucleoside enzyme that catalyzes the phosphorolysis of adenosine and inosine nucleosides, yielding D-ribose 1-phosphate and the respective free bases, adenine and hypoxanthine. Also catalyzes the phosphorolysis of S-methyl-5'-thioadenosine into adenine and S-methyl-5-thio-alpha-D-ribose 1-phosphate. Also has adenosine deaminase activity. This is Purine nucleoside phosphorylase PA4543 from Pseudomonas aeruginosa (strain ATCC 15692 / DSM 22644 / CIP 104116 / JCM 14847 / LMG 12228 / 1C / PRS 101 / PAO1).